Reading from the N-terminus, the 260-residue chain is MDRHSSYFFIWLQLELCAMAVLLTKGEIRCYCDAAHCVATGYMCKSELSACFSRLLDPQNTNSPLTHGCLDSLASTADICRAKQAQNHSGPAMPTLECCHEDMCNYRGLHDVLSPSKSEASGQGNRYQHDSSRNLITKMQELTSSKELWFRAAVIAVPIAGGLILVLLIMLALRMLRSENKRLQDERQQMLSRLHYSFHGHHSKKGQVAKLDLECMVPVSGQENCCLTCDKMRQAELSNEKILSLVHWGMYSGHGKLEFI.

The first 26 residues, 1–26 (MDRHSSYFFIWLQLELCAMAVLLTKG), serve as a signal peptide directing secretion. Residues 27-152 (EIRCYCDAAH…TSSKELWFRA (126 aa)) are Extracellular-facing. Asn87 carries an N-linked (GlcNAc...) asparagine glycan. Residues 153-173 (AVIAVPIAGGLILVLLIMLAL) traverse the membrane as a helical segment. Residues 174–260 (RMLRSENKRL…YSGHGKLEFI (87 aa)) are Cytoplasmic-facing.

This sequence belongs to the BAMBI family.

The protein localises to the membrane. Functionally, negatively regulates TGF-beta signaling. This chain is BMP and activin membrane-bound inhibitor homolog (Bambi), found in Mus musculus (Mouse).